We begin with the raw amino-acid sequence, 99 residues long: NADH-quinone oxidoreductase subunit K (99 aa).

The next 3 membrane-spanning stretches (helical) occupy residues 3–23 (LVNY…TVLV), 28–48 (IIMF…FVAF), and 59–79 (VVAF…LAII).

This sequence belongs to the complex I subunit 4L family. NDH-1 is composed of 14 different subunits. Subunits NuoA, H, J, K, L, M, N constitute the membrane sector of the complex.

Its subcellular location is the cell membrane. The enzyme catalyses a quinone + NADH + 5 H(+)(in) = a quinol + NAD(+) + 4 H(+)(out). NDH-1 shuttles electrons from NADH, via FMN and iron-sulfur (Fe-S) centers, to quinones in the respiratory chain. The immediate electron acceptor for the enzyme in this species is believed to be a menaquinone. Couples the redox reaction to proton translocation (for every two electrons transferred, four hydrogen ions are translocated across the cytoplasmic membrane), and thus conserves the redox energy in a proton gradient. The chain is NADH-quinone oxidoreductase subunit K from Beutenbergia cavernae (strain ATCC BAA-8 / DSM 12333 / CCUG 43141 / JCM 11478 / NBRC 16432 / NCIMB 13614 / HKI 0122).